We begin with the raw amino-acid sequence, 484 residues long: Putative beta-barrel assembly-enhancing protease (484 aa).

Residues 1 to 23 form the signal peptide; that stretch reads MKFFPTRTLLCLCIAAPCLPAIA. Zn(2+) is bound at residue H133. E134 is an active-site residue. Zn(2+)-binding residues include H137 and E198. D202 functions as the Proton donor in the catalytic mechanism. 4 TPR repeats span residues 307–340, 341–374, 376–408, and 426–459; these read PSIQYGKALVYLDLKQFDKAEPLLTQLVKEQPDN, HFYLDAISDLYIELKQADKAQSLLEKALKQTPNN, VLTINYANVLLKQDKFTDAIRILQRYTHDNPND, and AEDLAARGEIMALQANWNKAIQFYTQASQLVELG.

Belongs to the peptidase M48 family. BepA subfamily. Zn(2+) serves as cofactor.

It localises to the periplasm. Its function is as follows. Functions both as a chaperone and a metalloprotease. Maintains the integrity of the outer membrane by promoting either the assembly or the elimination of outer membrane proteins, depending on their folding state. The protein is Putative beta-barrel assembly-enhancing protease of Vibrio cholerae serotype O1 (strain ATCC 39315 / El Tor Inaba N16961).